The following is a 573-amino-acid chain: Multidrug and toxin extrusion protein 2 (573 aa).

Residues 1-46 (MEPAEDSLGATIQPPELVRVPRGRSLRILLGLRGALSPDVRREAAA) lie on the Cytoplasmic side of the membrane. Residues 47–67 (LVALAGPVFLAQLMIFLISIV) traverse the membrane as a helical segment. The Extracellular segment spans residues 68-81 (SSIFCGHLGKVELD). Residues 82–102 (AVTLAVSVVNVTGISVGTGLA) form a helical membrane-spanning segment. Residues 103–122 (SACDTLMSQSFGGKNLKRVG) are Cytoplasmic-facing. A helical membrane pass occupies residues 123-143 (VILQRGILILLLCCFPCWAIF). Residues 144 to 161 (LNTERLLLLLRQDPDVAR) lie on the Extracellular side of the membrane. A helical transmembrane segment spans residues 162-182 (LAQVYVMICIPALPAAFLFQL). The Cytoplasmic segment spans residues 183-196 (QTRYLQSQGIIMPQ). The chain crosses the membrane as a helical span at residues 197-217 (VIVGIAANVVNVGMNAFLLYA). At 218–225 (LDLGVVGS) the chain is on the extracellular side. Residues 226–246 (AWANTTSQFFLSALLFLYVWW) form a helical membrane-spanning segment. Over 247–266 (KRIHIHTWGGWTRECFQEWS) the chain is Cytoplasmic. The helical transmembrane segment at 267–286 (SYTRLAIPSMFMVCIEWWTF) threads the bilayer. Topologically, residues 287 to 304 (EIGTFLAGLVNVTELGAQ) are extracellular. Residues 305-325 (AVIYELASVAYMVPFGFGVAA) form a helical membrane-spanning segment. The Cytoplasmic portion of the chain corresponds to 326–345 (SVRVGNALGAGNADQARCSC). A helical transmembrane segment spans residues 346 to 366 (TTVLLCAGVCALLVGILLAAL). The Extracellular segment spans residues 367-379 (KDVVAYIFTNDKD). The helical transmembrane segment at 380 to 400 (IISLVSQVMPIFAPFHLFDAL) threads the bilayer. The Cytoplasmic portion of the chain corresponds to 401–415 (AGTCGGVLRGTGKQK). Residues 416–436 (IGAVLNTIGYYGFGFPIGVSL) traverse the membrane as a helical segment. Residues 437 to 443 (MFAAKLG) lie on the Extracellular side of the membrane. A helical membrane pass occupies residues 444-464 (IIGLWAGLIVCVSFQAFSYLI). Topologically, residues 465 to 545 (YILRTNWSRV…VGEVLTGRQL (81 aa)) are cytoplasmic. Residues 546 to 566 (VFYRGMALTVSVAVLIAGIVV) form a helical membrane-spanning segment. At 567–573 (RVFNDRG) the chain is on the extracellular side.

Belongs to the multi antimicrobial extrusion (MATE) (TC 2.A.66.1) family. As to expression, expressed in testis; especially in testicular Leydig cells.

It localises to the cell membrane. Its function is as follows. Multidrug efflux pump that functions as a H(+)/organic cation antiporter. May mediate testosterone efflux from the Leydig cells in the testes. In Mus musculus (Mouse), this protein is Multidrug and toxin extrusion protein 2 (Slc47a2).